Reading from the N-terminus, the 481-residue chain is Cysteine protease atg-4.1 (481 aa).

Residue cysteine 112 is the Nucleophile of the active site. Residues aspartate 313 and histidine 315 contribute to the active site. The interval 462-481 is disordered; the sequence is DVHTEEEDADEDNDDDVANA.

Belongs to the peptidase C54 family.

Its subcellular location is the cytoplasm. The catalysed reaction is [protein]-C-terminal L-amino acid-glycyl-phosphatidylethanolamide + H2O = [protein]-C-terminal L-amino acid-glycine + a 1,2-diacyl-sn-glycero-3-phosphoethanolamine. Cysteine protease required for autophagy. Cleaves the C-terminal amino acid of ATG8 family proteins lgg-1, to reveal a C-terminal glycine. Exposure of the glycine at the C-terminus is essential for ATG8 proteins conjugation to phosphatidylethanolamine (PE) and insertion to membranes, which is necessary for autophagy. Its cleavage activity is functionally redundant to atg-4.2, but it cleaves lgg-1 precursors more efficiently than atg-4.2. Acts redundantly with atg-4.2 to promote the lgg-1 delipidation to release the protein from membranes, which facilitates multiple events during macroautophagy. Unlike atg-4.2 does not seem to be required for autophagosome maturation. This chain is Cysteine protease atg-4.1, found in Caenorhabditis elegans.